Consider the following 462-residue polypeptide: Putative E3 ubiquitin-protein ligase XBAT35 (462 aa).

3 ANK repeats span residues 6-35 (SKGE…DLEW), 39-69 (EGKT…NVNA), and 75-104 (HAGT…NPLV). 2 disordered regions span residues 277–341 (HPPV…GKAS) and 356–402 (SSPS…EGER). Residues 304-317 (SLHTTMSDPSNLNH) show a composition bias toward polar residues. The span at 319-341 (SIGQASSSSGPSSSTAPPSGKAS) shows a compositional bias: low complexity. The RING-type zinc finger occupies 411–450 (CAICLDAPSEAVCVPCGHVAGCMSCLKEIKSKNWGCPVCR).

It catalyses the reaction S-ubiquitinyl-[E2 ubiquitin-conjugating enzyme]-L-cysteine + [acceptor protein]-L-lysine = [E2 ubiquitin-conjugating enzyme]-L-cysteine + N(6)-ubiquitinyl-[acceptor protein]-L-lysine.. Its pathway is protein modification; protein ubiquitination. Functionally, no E3 ubiquitin-protein ligase activity observed when associated with the E2 enzyme UBC8 in vitro. The protein is Putative E3 ubiquitin-protein ligase XBAT35 (XBAT35) of Arabidopsis thaliana (Mouse-ear cress).